A 130-amino-acid chain; its full sequence is Fluoride-specific ion channel FluC 2 (130 aa).

A run of 4 helical transmembrane segments spans residues 4–24, 38–58, 72–92, and 103–123; these read GLST…GAIC, NLWG…FFLA, LYLL…SLIL, and WMEL…FISL. G82 and S85 together coordinate Na(+).

This sequence belongs to the fluoride channel Fluc/FEX (TC 1.A.43) family.

It localises to the cell inner membrane. It catalyses the reaction fluoride(in) = fluoride(out). Na(+) is not transported, but it plays an essential structural role and its presence is essential for fluoride channel function. Functionally, fluoride-specific ion channel. Important for reducing fluoride concentration in the cell, thus reducing its toxicity. The polypeptide is Fluoride-specific ion channel FluC 2 (Prochlorococcus marinus (strain SARG / CCMP1375 / SS120)).